The following is a 427-amino-acid chain: 3-isopropylmalate dehydratase large subunit (427 aa).

Residues Cys-308, Cys-368, and Cys-371 each contribute to the [4Fe-4S] cluster site.

This sequence belongs to the aconitase/IPM isomerase family. LeuC type 2 subfamily. In terms of assembly, heterodimer of LeuC and LeuD. Requires [4Fe-4S] cluster as cofactor.

The catalysed reaction is (2R,3S)-3-isopropylmalate = (2S)-2-isopropylmalate. It participates in amino-acid biosynthesis; L-leucine biosynthesis; L-leucine from 3-methyl-2-oxobutanoate: step 2/4. In terms of biological role, catalyzes the isomerization between 2-isopropylmalate and 3-isopropylmalate, via the formation of 2-isopropylmaleate. In Citrifermentans bemidjiense (strain ATCC BAA-1014 / DSM 16622 / JCM 12645 / Bem) (Geobacter bemidjiensis), this protein is 3-isopropylmalate dehydratase large subunit.